A 326-amino-acid chain; its full sequence is Glutaminase 2 (326 aa).

Ser73, Asn125, Glu169, Asn176, Tyr200, Tyr252, and Val270 together coordinate substrate.

It belongs to the glutaminase family. In terms of assembly, homotetramer.

It catalyses the reaction L-glutamine + H2O = L-glutamate + NH4(+). This chain is Glutaminase 2, found in Bacillus anthracis.